The primary structure comprises 335 residues: Phosphate acyltransferase (335 aa).

Belongs to the PlsX family. In terms of assembly, homodimer. Probably interacts with PlsY.

The protein localises to the cytoplasm. It carries out the reaction a fatty acyl-[ACP] + phosphate = an acyl phosphate + holo-[ACP]. It participates in lipid metabolism; phospholipid metabolism. Catalyzes the reversible formation of acyl-phosphate (acyl-PO(4)) from acyl-[acyl-carrier-protein] (acyl-ACP). This enzyme utilizes acyl-ACP as fatty acyl donor, but not acyl-CoA. This is Phosphate acyltransferase from Streptococcus pyogenes serotype M1.